The sequence spans 661 residues: Cartilage acidic protein 1 (661 aa).

The N-terminal stretch at 1 to 27 (MAPSADPGMSRMLPFLLLLWFLPITEG) is a signal peptide. The FG-GAP 1; atypical repeat unit spans residues 46 to 88 (DYDSNPTQLNYGVAVTDVDHDGDFEIVVAGYNGPNLVLKYDRA). The FG-GAP 2; atypical repeat unit spans residues 105 to 147 (YALRDRQGNAIGVTACDIDGDGREEIYFLNTNNAFSGVATYTD). One copy of the FG-GAP 3; atypical repeat lies at 283-333 (AGVDDPHQHGRGVALADFNRDGKVDIVYGNWNGPHRLYLQMSTHGKVRFRD). The FG-GAP 4; atypical repeat unit spans residues 395–437 (GDALEPEGRGTGGVVTDFDGDGMLDLILSHGESMAQPLSVFRG). The EGF-like domain occupies 559–605 (DTNECIQFPFVCPRDKPVCVNTYGSYRCRTNKKCSRGYEPNEDGTAC). Disulfide bonds link Cys563–Cys577, Cys570–Cys586, and Cys592–Cys605. Residues Thr608, Thr618, Thr619, Thr621, and Thr626 are each glycosylated (O-linked (GalNAc...) threonine).

O-glycosylated. In terms of tissue distribution, expressed in the interterritorial matrix of articular deep zone cartilage (at protein level). Isoform 1 and isoform 2 are expressed in brain. Isoform 1 is detected in lung and chondrocytes. Detected in cartilage, bone, cultured chondrocytes and lung, and at low levels in heart. Not detected in osteoblasts.

The protein resides in the secreted. It is found in the extracellular space. Its subcellular location is the extracellular matrix. This chain is Cartilage acidic protein 1 (CRTAC1), found in Homo sapiens (Human).